The following is a 315-amino-acid chain: Pantothenate kinase (315 aa).

94–101 (GSVAVGKS) contributes to the ATP binding site.

Belongs to the prokaryotic pantothenate kinase family.

The protein resides in the cytoplasm. The catalysed reaction is (R)-pantothenate + ATP = (R)-4'-phosphopantothenate + ADP + H(+). It functions in the pathway cofactor biosynthesis; coenzyme A biosynthesis; CoA from (R)-pantothenate: step 1/5. The sequence is that of Pantothenate kinase from Shewanella amazonensis (strain ATCC BAA-1098 / SB2B).